Consider the following 222-residue polypeptide: N-(5'-phosphoribosyl)anthranilate isomerase (222 aa).

This sequence belongs to the TrpF family.

The enzyme catalyses N-(5-phospho-beta-D-ribosyl)anthranilate = 1-(2-carboxyphenylamino)-1-deoxy-D-ribulose 5-phosphate. It participates in amino-acid biosynthesis; L-tryptophan biosynthesis; L-tryptophan from chorismate: step 3/5. This is N-(5'-phosphoribosyl)anthranilate isomerase from Symbiobacterium thermophilum (strain DSM 24528 / JCM 14929 / IAM 14863 / T).